We begin with the raw amino-acid sequence, 44 residues long: Protein PsbN (44 aa).

Residues 6–26 (FFFTIFLWCLLLSVTGYSVYV) form a helical membrane-spanning segment.

Belongs to the PsbN family.

Its subcellular location is the plastid. The protein resides in the chloroplast thylakoid membrane. Its function is as follows. May play a role in photosystem I and II biogenesis. The sequence is that of Protein PsbN from Oltmannsiellopsis viridis (Marine flagellate).